The primary structure comprises 249 residues: Putative S-adenosyl-L-methionine-dependent methyltransferase Mkms_0592 (249 aa).

Residues Asp-111 and Asp-141–Leu-142 each bind S-adenosyl-L-methionine.

Belongs to the UPF0677 family.

Functionally, exhibits S-adenosyl-L-methionine-dependent methyltransferase activity. The chain is Putative S-adenosyl-L-methionine-dependent methyltransferase Mkms_0592 from Mycobacterium sp. (strain KMS).